The chain runs to 350 residues: tRNA uridine(34) hydroxylase (350 aa).

A Rhodanese domain is found at 146–240 (DDPDAVFIDM…YARRARAQGL (95 aa)). Cys-200 serves as the catalytic Cysteine persulfide intermediate. Positions 319 to 328 (RRRRAGRENG) are enriched in basic and acidic residues. The interval 319-350 (RRRRAGRENGNKIFNKSRGRLNSKLSIPDPAE) is disordered.

Belongs to the TrhO family.

It carries out the reaction uridine(34) in tRNA + AH2 + O2 = 5-hydroxyuridine(34) in tRNA + A + H2O. In terms of biological role, catalyzes oxygen-dependent 5-hydroxyuridine (ho5U) modification at position 34 in tRNAs. In Salmonella paratyphi B (strain ATCC BAA-1250 / SPB7), this protein is tRNA uridine(34) hydroxylase.